Reading from the N-terminus, the 346-residue chain is Cytidine deaminase 5 (346 aa).

CMP/dCMP-type deaminase domains are found at residues 20–148 (TDHK…FGSE) and 183–304 (DLCS…ITGA). 58–60 (NVE) provides a ligand contact to substrate. Zn(2+) is bound at residue His-71. Glu-73 (proton donor) is an active-site residue. Cys-104 and Cys-107 together coordinate Zn(2+).

The protein belongs to the cytidine and deoxycytidylate deaminase family. In terms of assembly, homodimer. It depends on Zn(2+) as a cofactor.

It catalyses the reaction cytidine + H2O + H(+) = uridine + NH4(+). The catalysed reaction is 2'-deoxycytidine + H2O + H(+) = 2'-deoxyuridine + NH4(+). Its function is as follows. This enzyme scavenges exogenous and endogenous cytidine and 2'-deoxycytidine for UMP synthesis. This chain is Cytidine deaminase 5 (CDA5), found in Arabidopsis thaliana (Mouse-ear cress).